The sequence spans 235 residues: Leucyl/phenylalanyl-tRNA--protein transferase (235 aa).

Belongs to the L/F-transferase family.

Its subcellular location is the cytoplasm. It carries out the reaction N-terminal L-lysyl-[protein] + L-leucyl-tRNA(Leu) = N-terminal L-leucyl-L-lysyl-[protein] + tRNA(Leu) + H(+). The enzyme catalyses N-terminal L-arginyl-[protein] + L-leucyl-tRNA(Leu) = N-terminal L-leucyl-L-arginyl-[protein] + tRNA(Leu) + H(+). The catalysed reaction is L-phenylalanyl-tRNA(Phe) + an N-terminal L-alpha-aminoacyl-[protein] = an N-terminal L-phenylalanyl-L-alpha-aminoacyl-[protein] + tRNA(Phe). Its function is as follows. Functions in the N-end rule pathway of protein degradation where it conjugates Leu, Phe and, less efficiently, Met from aminoacyl-tRNAs to the N-termini of proteins containing an N-terminal arginine or lysine. The sequence is that of Leucyl/phenylalanyl-tRNA--protein transferase from Methylococcus capsulatus (strain ATCC 33009 / NCIMB 11132 / Bath).